A 114-amino-acid chain; its full sequence is Photosystem II reaction center Psb28 protein (114 aa).

The protein belongs to the Psb28 family. As to quaternary structure, part of the photosystem II complex.

The protein localises to the cellular thylakoid membrane. The sequence is that of Photosystem II reaction center Psb28 protein from Rippkaea orientalis (strain PCC 8801 / RF-1) (Cyanothece sp. (strain PCC 8801)).